The sequence spans 406 residues: Interactor protein for cytohesin exchange factors 1 (406 aa).

The PH domain occupies 13-112 (HADCQGWLYK…WLNKLGFAVT (100 aa)). 3 disordered regions span residues 120–173 (DEEC…FSSL), 253–285 (SLNN…EDDE), and 383–406 (PQDP…ENSL). Acidic residues predominate over residues 123 to 134 (CYSESEQEDPEV). Positions 144–153 (ASTTSSPVAA) are enriched in low complexity. Residue arginine 164 is modified to Phosphoserine. The segment covering 272–285 (MADREEIKSSEDDE) has biased composition (basic and acidic residues). Residues 392-406 (EVMNPTSSDCVENSL) are compositionally biased toward polar residues.

In terms of assembly, interacts with guanine-nucleotide exchange factors PSCD1, PSCD2, PSCD3 and PSCD4.

Its subcellular location is the cytoplasm. The protein localises to the cell membrane. In terms of biological role, enhances the promotion of guanine-nucleotide exchange by PSCD2 on ARF6 in a concentration-dependent manner. This is Interactor protein for cytohesin exchange factors 1 (Ipcef1) from Mus musculus (Mouse).